The following is a 274-amino-acid chain: N-acetylmuramic acid 6-phosphate etherase (274 aa).

The SIS domain occupies 52 to 215 (IIPRMEQGGR…STSIMIRLGR (164 aa)). Catalysis depends on Glu80, which acts as the Proton donor. Residue Glu111 is part of the active site.

Belongs to the GCKR-like family. MurNAc-6-P etherase subfamily. In terms of assembly, homodimer.

It catalyses the reaction N-acetyl-D-muramate 6-phosphate + H2O = N-acetyl-D-glucosamine 6-phosphate + (R)-lactate. The protein operates within amino-sugar metabolism; N-acetylmuramate degradation. Specifically catalyzes the cleavage of the D-lactyl ether substituent of MurNAc 6-phosphate, producing GlcNAc 6-phosphate and D-lactate. The protein is N-acetylmuramic acid 6-phosphate etherase of Porphyromonas gingivalis (strain ATCC BAA-308 / W83).